Consider the following 557-residue polypeptide: CTP synthase (557 aa).

The segment at 1–270 (MTKYVFVTGG…DAIICEELKL (270 aa)) is amidoligase domain. Ser-13 contacts CTP. UTP is bound at residue Ser-13. ATP contacts are provided by residues 14–19 (SLGKGI) and Asp-71. Positions 71 and 144 each coordinate Mg(2+). Residues 151 to 153 (DIE), 191 to 196 (KTKPTQ), and Lys-227 each bind CTP. Residues 191 to 196 (KTKPTQ) and Lys-227 contribute to the UTP site. The Glutamine amidotransferase type-1 domain occupies 295–547 (TIGMVGKYVD…VEAALAHQQS (253 aa)). L-glutamine is bound at residue Gly-356. Cys-383 functions as the Nucleophile; for glutamine hydrolysis in the catalytic mechanism. L-glutamine-binding positions include 384-387 (LGMQ), Glu-407, and Arg-473. Active-site residues include His-520 and Glu-522.

Belongs to the CTP synthase family. Homotetramer.

It carries out the reaction UTP + L-glutamine + ATP + H2O = CTP + L-glutamate + ADP + phosphate + 2 H(+). The catalysed reaction is L-glutamine + H2O = L-glutamate + NH4(+). It catalyses the reaction UTP + NH4(+) + ATP = CTP + ADP + phosphate + 2 H(+). It participates in pyrimidine metabolism; CTP biosynthesis via de novo pathway; CTP from UDP: step 2/2. Its activity is regulated as follows. Allosterically activated by GTP, when glutamine is the substrate; GTP has no effect on the reaction when ammonia is the substrate. The allosteric effector GTP functions by stabilizing the protein conformation that binds the tetrahedral intermediate(s) formed during glutamine hydrolysis. Inhibited by the product CTP, via allosteric rather than competitive inhibition. Functionally, catalyzes the ATP-dependent amination of UTP to CTP with either L-glutamine or ammonia as the source of nitrogen. Regulates intracellular CTP levels through interactions with the four ribonucleotide triphosphates. This is CTP synthase from Paraburkholderia xenovorans (strain LB400).